The primary structure comprises 427 residues: UPF0597 protein CPR_0790 (427 aa).

The protein belongs to the UPF0597 family.

In Clostridium perfringens (strain SM101 / Type A), this protein is UPF0597 protein CPR_0790.